The primary structure comprises 175 residues: DASH complex subunit DAM1 (175 aa).

Residues 1–39 are disordered; sequence MAPEDTNPQSSHRRTRSTSRSRPTTPLRPSSRSSFRSSA. Over residues 20–39 the composition is skewed to low complexity; it reads RSRPTTPLRPSSRSSFRSSA.

Belongs to the DASH complex DAM1 family. In terms of assembly, component of the DASH complex consisting of ASK1, DAD1, DAD2, DAD3, DAD4, DAM1, DUO1, HSK3, SPC19 and SPC34, with a stoichiometry of one copy of each subunit per complex. Multiple DASH complexes oligomerize to form a ring that encircles spindle microtubules and organizes the rod-like NDC80 complexes of the outer kinetochore. DASH complex oligomerization strengthens microtubule attachments. On cytoplasmic microtubules, DASH complexes appear to form patches instead of rings.

The protein resides in the chromosome. Its subcellular location is the centromere. It is found in the kinetochore. It localises to the cytoplasm. The protein localises to the cytoskeleton. The protein resides in the spindle. Its subcellular location is the nucleus. In terms of biological role, component of the DASH complex that connects microtubules with kinetochores and couples microtubule depolymerisation to chromosome movement; it is involved in retrieving kinetochores to the spindle poles before their re-orientation on the spindle in early mitosis and allows microtubule depolymerization to pull chromosomes apart and resist detachment during anaphase. Kinetochores, consisting of a centromere-associated inner segment and a microtubule-contacting outer segment, play a crucial role in chromosome segregation by mediating the physical connection between centromeric DNA and microtubules. Kinetochores also serve as an input point for the spindle assembly checkpoint, which delays anaphase until all chromosomes have bioriented on the mitotic spindle. The polypeptide is DASH complex subunit DAM1 (Chaetomium thermophilum (strain DSM 1495 / CBS 144.50 / IMI 039719) (Thermochaetoides thermophila)).